The chain runs to 81 residues: Insulin (81 aa).

3 disulfide bridges follow: C7/C67, C19/C80, and C66/C71. Positions 33 to 58 (DVEQPLVNGPLHGEVGELPFQHEEYQ) are cleaved as a propeptide — c peptide.

This sequence belongs to the insulin family. Heterodimer of a B chain and an A chain linked by two disulfide bonds.

Its subcellular location is the secreted. In terms of biological role, insulin decreases blood glucose concentration. It increases cell permeability to monosaccharides, amino acids and fatty acids. It accelerates glycolysis, the pentose phosphate cycle, and glycogen synthesis in liver. In Anas platyrhynchos (Mallard), this protein is Insulin (INS).